A 321-amino-acid polypeptide reads, in one-letter code: GTP 3',8-cyclase (321 aa).

Residues 5 to 227 enclose the Radical SAM core domain; sequence SYDRVVDYLR…DEGYDGASPS (223 aa). GTP is bound at residue R14. Positions 21 and 25 each coordinate [4Fe-4S] cluster. Residue Y27 coordinates S-adenosyl-L-methionine. C28 provides a ligand contact to [4Fe-4S] cluster. R64 serves as a coordination point for GTP. G68 contributes to the S-adenosyl-L-methionine binding site. T95 is a GTP binding site. Residue S119 participates in S-adenosyl-L-methionine binding. Residue K155 participates in GTP binding. M189 contributes to the S-adenosyl-L-methionine binding site. [4Fe-4S] cluster contacts are provided by C249 and C252. 254 to 256 contributes to the GTP binding site; it reads RIR. [4Fe-4S] cluster is bound at residue C266.

This sequence belongs to the radical SAM superfamily. MoaA family. As to quaternary structure, monomer and homodimer. Requires [4Fe-4S] cluster as cofactor.

The enzyme catalyses GTP + AH2 + S-adenosyl-L-methionine = (8S)-3',8-cyclo-7,8-dihydroguanosine 5'-triphosphate + 5'-deoxyadenosine + L-methionine + A + H(+). It functions in the pathway cofactor biosynthesis; molybdopterin biosynthesis. Functionally, catalyzes the cyclization of GTP to (8S)-3',8-cyclo-7,8-dihydroguanosine 5'-triphosphate. The protein is GTP 3',8-cyclase of Sulfurimonas denitrificans (strain ATCC 33889 / DSM 1251) (Thiomicrospira denitrificans (strain ATCC 33889 / DSM 1251)).